The chain runs to 637 residues: Biosynthetic arginine decarboxylase (637 aa).

Position 101 is an N6-(pyridoxal phosphate)lysine (Lys-101). Substrate is bound at residue 286 to 296 (FDVGGGLAVDY).

The protein belongs to the Orn/Lys/Arg decarboxylase class-II family. SpeA subfamily. Mg(2+) is required as a cofactor. Pyridoxal 5'-phosphate serves as cofactor.

It catalyses the reaction L-arginine + H(+) = agmatine + CO2. It participates in amine and polyamine biosynthesis; agmatine biosynthesis; agmatine from L-arginine: step 1/1. Its function is as follows. Catalyzes the biosynthesis of agmatine from arginine. The sequence is that of Biosynthetic arginine decarboxylase from Shewanella piezotolerans (strain WP3 / JCM 13877).